The following is a 255-amino-acid chain: BPI fold-containing family A member 1 (255 aa).

Residues 1-19 form the signal peptide; that stretch reads MFHIGSLVVLCGLLAPTTA. An important for surfactant activity and antibacterial properties region spans residues 87 to 92; that stretch reads LLGSLL. N-linked (GlcNAc...) asparagine glycosylation is found at Asn-157, Asn-178, and Asn-205. An intrachain disulfide couples Cys-179 to Cys-223.

This sequence belongs to the BPI/LBP/Plunc superfamily. Plunc family. As to quaternary structure, monomer. Interacts (via N-terminus) with SCNN1B, a subunit of the heterotrimeric epithelial sodium channel (ENaC); this inhibits proteolytic activation of ENaC. As to expression, expressed in trachea, and at lower levels in nasal epithelium.

It is found in the secreted. Lipid-binding protein which shows high specificity for the surfactant phospholipid dipalmitoylphosphatidylcholine (DPPC). Plays a role in the innate immune responses of the upper airways. Reduces the surface tension in secretions from airway epithelia and inhibits the formation of biofilm by pathogenic Gram-negative bacteria, such as P.aeruginosa and K.pneumoniae. Negatively regulates proteolytic cleavage of SCNN1G, an event that is required for activation of the epithelial sodium channel (ENaC), and thereby contributes to airway surface liquid homeostasis and proper clearance of mucus. Plays a role in the airway inflammatory response after exposure to irritants. May attract macrophages and neutrophils. The chain is BPI fold-containing family A member 1 (BPIFA1) from Bos taurus (Bovine).